The following is a 351-amino-acid chain: Sulfate/thiosulfate import ATP-binding protein CysA (351 aa).

The ABC transporter domain maps to 5 to 235; the sequence is IVVADATKRY…PANAFVMSFL (231 aa). Residue 37–44 participates in ATP binding; the sequence is GPSGSGKS.

The protein belongs to the ABC transporter superfamily. Sulfate/tungstate importer (TC 3.A.1.6) family. In terms of assembly, the complex is composed of two ATP-binding proteins (CysA), two transmembrane proteins (CysT and CysW) and a solute-binding protein (CysP).

Its subcellular location is the cell membrane. The enzyme catalyses sulfate(out) + ATP + H2O = sulfate(in) + ADP + phosphate + H(+). It carries out the reaction thiosulfate(out) + ATP + H2O = thiosulfate(in) + ADP + phosphate + H(+). Its function is as follows. Part of the ABC transporter complex CysAWTP involved in sulfate/thiosulfate import. Responsible for energy coupling to the transport system. In Mycobacterium bovis (strain ATCC BAA-935 / AF2122/97), this protein is Sulfate/thiosulfate import ATP-binding protein CysA.